Here is a 131-residue protein sequence, read N- to C-terminus: D-ribose pyranase (131 aa).

H20 functions as the Proton donor in the catalytic mechanism. Substrate-binding positions include D28, H98, and 120-122 (YSN).

It belongs to the RbsD / FucU family. RbsD subfamily. Homodecamer.

It is found in the cytoplasm. The catalysed reaction is beta-D-ribopyranose = beta-D-ribofuranose. It functions in the pathway carbohydrate metabolism; D-ribose degradation; D-ribose 5-phosphate from beta-D-ribopyranose: step 1/2. Its function is as follows. Catalyzes the interconversion of beta-pyran and beta-furan forms of D-ribose. The chain is D-ribose pyranase from Lactiplantibacillus plantarum (strain ATCC BAA-793 / NCIMB 8826 / WCFS1) (Lactobacillus plantarum).